A 408-amino-acid chain; its full sequence is Peptidase T (408 aa).

Position 78 (His78) interacts with Zn(2+). Residue Asp80 is part of the active site. Asp140 contacts Zn(2+). Glu174 acts as the Proton acceptor in catalysis. Residues Glu175, Asp197, and His379 each contribute to the Zn(2+) site.

The protein belongs to the peptidase M20B family. Requires Zn(2+) as cofactor.

The protein resides in the cytoplasm. The catalysed reaction is Release of the N-terminal residue from a tripeptide.. In terms of biological role, cleaves the N-terminal amino acid of tripeptides. The protein is Peptidase T of Staphylococcus aureus (strain MRSA252).